A 242-amino-acid chain; its full sequence is C-reactive protein 1.4 (242 aa).

Residues 1–24 (MKTFHGPTFGTAVFLYLLLFLTSA) form the signal peptide. A Pentraxin (PTX) domain is found at 30–241 (ITSKVKFPPS…GVVLSPNEIC (212 aa)). Positions 60 and 63 each coordinate phosphocholine. Cystine bridges form between cysteine 62-cysteine 125 and cysteine 112-cysteine 144. Aspartate 85 and asparagine 86 together coordinate Ca(2+). Residue asparagine 147 is glycosylated (N-linked (GlcNAc...) asparagine). Glutamate 168, glutamine 169, aspartate 170, and glutamine 180 together coordinate Ca(2+). Cysteine 207 and cysteine 241 are joined by a disulfide.

This sequence belongs to the pentraxin family. Homopentamer. Pentraxin (or pentaxin) have a discoid arrangement of 5 non-covalently bound subunits. Ca(2+) serves as cofactor.

The protein resides in the secreted. Its function is as follows. Might serve the role of immunoglobulins. This chain is C-reactive protein 1.4, found in Limulus polyphemus (Atlantic horseshoe crab).